A 396-amino-acid chain; its full sequence is Acetate kinase (396 aa).

A Mg(2+)-binding site is contributed by Asn6. Lys13 provides a ligand contact to ATP. Arg89 provides a ligand contact to substrate. Asp145 (proton donor/acceptor) is an active-site residue. ATP is bound by residues 205-209 (HLGNG), 280-282 (DMR), and 329-333 (GVGEN). A Mg(2+)-binding site is contributed by Glu383.

Belongs to the acetokinase family. As to quaternary structure, homodimer. The cofactor is Mg(2+). Requires Mn(2+) as cofactor.

The protein resides in the cytoplasm. It catalyses the reaction acetate + ATP = acetyl phosphate + ADP. It participates in metabolic intermediate biosynthesis; acetyl-CoA biosynthesis; acetyl-CoA from acetate: step 1/2. Its function is as follows. Catalyzes the formation of acetyl phosphate from acetate and ATP. Can also catalyze the reverse reaction. The sequence is that of Acetate kinase from Mesoplasma florum (strain ATCC 33453 / NBRC 100688 / NCTC 11704 / L1) (Acholeplasma florum).